Consider the following 550-residue polypeptide: Glycosyltransferase-like protein gnt12 (550 aa).

Positions 1–29 (MSYLPLYNNNNNINNNNNNNNNRINNNKE) are disordered. The Cytoplasmic portion of the chain corresponds to 1–36 (MSYLPLYNNNNNINNNNNNNNNRINNNKEKGVKNKP). Residues 8-25 (NNNNNINNNNNNNNNRIN) show a composition bias toward low complexity. Residues 37–57 (FQIFISIVFIVFLCFFLIWSM) traverse the membrane as a helical; Signal-anchor for type II membrane protein segment. The Extracellular portion of the chain corresponds to 58-550 (EAKKDKNIKI…LFNEPLTNEC (493 aa)). Over residues 81–97 (LINEPINNNKNNKNNIP) the composition is skewed to low complexity. A disordered region spans residues 81–100 (LINEPINNNKNNKNNIPKNH). N-linked (GlcNAc...) asparagine glycosylation is found at Asn233, Asn322, and Asn426.

Belongs to the glycosyltransferase 8 family. Highly divergent.

The protein localises to the membrane. In Dictyostelium discoideum (Social amoeba), this protein is Glycosyltransferase-like protein gnt12 (gnt12).